Reading from the N-terminus, the 180-residue chain is 4-hydroxy-3-methylbut-2-enyl diphosphate reductase (180 aa).

Position 12 (Cys12) interacts with [4Fe-4S] cluster. His41 and His74 together coordinate (2E)-4-hydroxy-3-methylbut-2-enyl diphosphate. Dimethylallyl diphosphate contacts are provided by His41 and His74. Isopentenyl diphosphate-binding residues include His41 and His74. Cys96 contacts [4Fe-4S] cluster. Position 124 (His124) interacts with (2E)-4-hydroxy-3-methylbut-2-enyl diphosphate. Residue His124 participates in dimethylallyl diphosphate binding. His124 is a binding site for isopentenyl diphosphate. The active-site Proton donor is the Glu126. Thr168 lines the (2E)-4-hydroxy-3-methylbut-2-enyl diphosphate pocket.

It belongs to the IspH family. [4Fe-4S] cluster serves as cofactor.

The enzyme catalyses isopentenyl diphosphate + 2 oxidized [2Fe-2S]-[ferredoxin] + H2O = (2E)-4-hydroxy-3-methylbut-2-enyl diphosphate + 2 reduced [2Fe-2S]-[ferredoxin] + 2 H(+). It carries out the reaction dimethylallyl diphosphate + 2 oxidized [2Fe-2S]-[ferredoxin] + H2O = (2E)-4-hydroxy-3-methylbut-2-enyl diphosphate + 2 reduced [2Fe-2S]-[ferredoxin] + 2 H(+). The protein operates within isoprenoid biosynthesis; dimethylallyl diphosphate biosynthesis; dimethylallyl diphosphate from (2E)-4-hydroxy-3-methylbutenyl diphosphate: step 1/1. Its pathway is isoprenoid biosynthesis; isopentenyl diphosphate biosynthesis via DXP pathway; isopentenyl diphosphate from 1-deoxy-D-xylulose 5-phosphate: step 6/6. Its function is as follows. Catalyzes the conversion of 1-hydroxy-2-methyl-2-(E)-butenyl 4-diphosphate (HMBPP) into a mixture of isopentenyl diphosphate (IPP) and dimethylallyl diphosphate (DMAPP). Acts in the terminal step of the DOXP/MEP pathway for isoprenoid precursor biosynthesis. The protein is 4-hydroxy-3-methylbut-2-enyl diphosphate reductase of Pseudomonas fluorescens.